A 243-amino-acid polypeptide reads, in one-letter code: UDP-2,3-diacylglucosamine hydrolase (243 aa).

Mn(2+) is bound by residues Asp8, His10, Asp41, Asn79, and His114. 79–80 (NR) is a substrate binding site. Residues Asp122, Lys164, Lys167, and His195 each coordinate substrate. Mn(2+) is bound by residues His195 and His197.

It belongs to the LpxH family. It depends on Mn(2+) as a cofactor.

Its subcellular location is the cell inner membrane. The catalysed reaction is UDP-2-N,3-O-bis[(3R)-3-hydroxytetradecanoyl]-alpha-D-glucosamine + H2O = 2-N,3-O-bis[(3R)-3-hydroxytetradecanoyl]-alpha-D-glucosaminyl 1-phosphate + UMP + 2 H(+). The protein operates within glycolipid biosynthesis; lipid IV(A) biosynthesis; lipid IV(A) from (3R)-3-hydroxytetradecanoyl-[acyl-carrier-protein] and UDP-N-acetyl-alpha-D-glucosamine: step 4/6. Functionally, hydrolyzes the pyrophosphate bond of UDP-2,3-diacylglucosamine to yield 2,3-diacylglucosamine 1-phosphate (lipid X) and UMP by catalyzing the attack of water at the alpha-P atom. Involved in the biosynthesis of lipid A, a phosphorylated glycolipid that anchors the lipopolysaccharide to the outer membrane of the cell. This is UDP-2,3-diacylglucosamine hydrolase from Vibrio vulnificus (strain YJ016).